Here is a 1166-residue protein sequence, read N- to C-terminus: Folliculin-interacting protein 1 (1166 aa).

In terms of domain architecture, uDENN FNIP1/2-type spans 37 to 478 (FDPSQIRLIV…TVMPNGQPPI (442 aa)). Phosphoserine; by AMPK is present on residues Ser220, Ser230, Ser232, and Ser261. Thr294 carries the post-translational modification Phosphothreonine. A Phosphoserine modification is found at Ser296. Positions 486–1092 (SSQSVDMLAK…VSNLLHSTLQ (607 aa)) constitute a cDENN FNIP1/2-type domain. Phosphoserine; by AMPK is present on Ser593. Ser594 is subject to Phosphoserine. Zn(2+) is bound by residues Cys608 and Cys610. Residues 608–615 (CNCKYCSH) carry the Cys degron motif. The interval 611-612 (KY) is KY-finger. 2 residues coordinate Zn(2+): Cys613 and His615. Ser760 and Ser763 each carry phosphoserine. Disordered regions lie at residues 781–817 (TKPLKEERGAIDQHQETKQTTKDQSGESDTQNMVSEE) and 912–956 (LVPH…HDMT). 2 stretches are compositionally biased toward basic and acidic residues: residues 783-805 (PLKEERGAIDQHQETKQTTKDQS) and 915-925 (HGDKESSDKKI). The interval 929 to 1166 (TEWDIPRNES…HSPYVAQILL (238 aa)) is interaction with HSP90AA1. The residue at position 938 (Ser938) is a Phosphoserine; alternate; by CK2. An O-linked (GlcNAc) serine; alternate glycan is attached at Ser938. Residues Ser939, Ser941, Ser946, and Ser948 each carry the phosphoserine; by CK2 modification. The dDENN FNIP1/2-type domain occupies 1102–1157 (FCVMHLEDRLQELYFKSKMLSEYLRGQMRVHVKELGVVLGIESSDLPLLAAVASTH). Lys1119 participates in a covalent cross-link: Glycyl lysine isopeptide (Lys-Gly) (interchain with G-Cter in ubiquitin).

Belongs to the FNIP family. Homodimer and homomultimer. Heterodimer and heteromultimer with FNIP2. Interacts with FLCN (via C-terminus). Component of the lysosomal folliculin complex (LFC), composed of FLCN, FNIP1 (or FNIP2), RagA/RRAGA or RagB/RRAGB GDP-bound, RagC/RRAGC or RagD/RRAGD GTP-bound, and Ragulator. Interacts with HSPCA and with the PRKAA1, PRKAB1 and PRKAG1 subunits of 5'-AMP-activated protein kinase (AMPK). Phosphorylated FLCN and AMPK are preferentially bound. Interacts with HSP70, STIP1, PTGES3, CDC37, BRAF, GCR and CDK4. Interacts with HSP90AA1; the interaction inhibits HSP90AA1 ATPase activity. Interacts with ATP2A2. Phosphorylated by AMPK in response to energetic stress. Phosphorylation by AMPK in response to mitochondrial damage promotes inactivation of the non-canonical mTORC1 signaling, nuclear translocation of TFEB and TFE3, inducing transcription of lysosomal or autophagy genes. Sequential phosphorylation by CK2 promotes its gradual interaction with HSP90AA1/Hsp90. Priming phosphorylation at Ser-938 is followed by relay phosphorylation at Ser-939, Ser-941, Ser-946 and Ser-948, promoting its gradual interaction with HSP90AA1/Hsp90. This leads to incremental inhibition of HSP90AA1/Hsp90 ATPase activity and gradual activation of both kinase and non-kinase clients. Dephosphorylated by protein phosphatase 5 (PP5), promoting glycosylation by OGT. In terms of processing, glcNAcylation at Ser-938 by OGT following dephosphorylation by protein phosphatase 5 (PP5) promotes ubiquitination and degradation by the proteasome. Post-translationally, ubiquitinated through 'Lys-11' linkage of ubiquitin moieties at Lys-1119 following glycosylation by OGT, leading to its degradation by the proteasome. Ubiquitinated by the CRL2(FEM1B) complex in response to reductive stress: reductive stress causes reduction of the conserved Cys degron in FNIP1, followed by zinc-binding, zinc acting as a molecular glue for recognition by the CRL2(FEM1B) complex. Ubiquitination leads to FNIP1 degradation, and activation of mitochondria to recalibrate reactive oxygen species (ROS). Oxidation of the Cys degron in normal conditions promotes its stabilization by preventing recognition and ubiquitination by the CRL2(FEM1B) complex. As to expression, strong expression is found in the heart, liver placenta, muscle, nasal mucosa, salivary gland and uvula and moderate expression in kidney and lung. Higher levels detected in clear cell renal cell carcinoma (RCC) and chromophobe RCC than in normal kidney tissue. Expressed in peripheral blood mononuclear cells.

It localises to the lysosome membrane. Its subcellular location is the cytoplasm. It is found in the cytosol. In terms of biological role, binding partner of the GTPase-activating protein FLCN: involved in the cellular response to amino acid availability by regulating the non-canonical mTORC1 signaling cascade controlling the MiT/TFE factors TFEB and TFE3. Required to promote FLCN recruitment to lysosomes and interaction with Rag GTPases, leading to activation of the non-canonical mTORC1 signaling. In low-amino acid conditions, component of the lysosomal folliculin complex (LFC) on the membrane of lysosomes, which inhibits the GTPase-activating activity of FLCN, thereby inactivating mTORC1 and promoting nuclear translocation of TFEB and TFE3. Upon amino acid restimulation, disassembly of the LFC complex liberates the GTPase-activating activity of FLCN, leading to activation of mTORC1 and subsequent inactivation of TFEB and TFE3. Together with FLCN, regulates autophagy: following phosphorylation by ULK1, interacts with GABARAP and promotes autophagy. In addition to its role in mTORC1 signaling, also acts as a co-chaperone of HSP90AA1/Hsp90: following gradual phosphorylation by CK2, inhibits the ATPase activity of HSP90AA1/Hsp90, leading to activate both kinase and non-kinase client proteins of HSP90AA1/Hsp90. Acts as a scaffold to load client protein FLCN onto HSP90AA1/Hsp90. Competes with the activating co-chaperone AHSA1 for binding to HSP90AA1, thereby providing a reciprocal regulatory mechanism for chaperoning of client proteins. Also acts as a core component of the reductive stress response by inhibiting activation of mitochondria in normal conditions: in response to reductive stress, the conserved Cys degron is reduced, leading to recognition and polyubiquitylation by the CRL2(FEM1B) complex, followed by proteasomal. Required for B-cell development. This chain is Folliculin-interacting protein 1, found in Homo sapiens (Human).